The sequence spans 500 residues: Cytochrome P450 2D3 (500 aa).

Position 446 (Cys446) interacts with heme.

Belongs to the cytochrome P450 family. Heme is required as a cofactor.

The protein resides in the endoplasmic reticulum membrane. The protein localises to the microsome membrane. It carries out the reaction an organic molecule + reduced [NADPH--hemoprotein reductase] + O2 = an alcohol + oxidized [NADPH--hemoprotein reductase] + H2O + H(+). Cytochromes P450 are a group of heme-thiolate monooxygenases. In liver microsomes, this enzyme is involved in an NADPH-dependent electron transport pathway. It oxidizes a variety of structurally unrelated compounds, including steroids, fatty acids, and xenobiotics. This is Cytochrome P450 2D3 (Cyp2d3) from Rattus norvegicus (Rat).